A 198-amino-acid polypeptide reads, in one-letter code: Inosine triphosphate pyrophosphatase (198 aa).

Ala2 bears the N-acetylalanine mark. 14-19 (TGNAKK) lines the ITP pocket. Glu44 contacts Mg(2+). ITP contacts are provided by residues Lys56, 72 to 73 (DT), and Lys89. Phosphoserine is present on Ser146. Residues 149-152 (FGWD), Lys172, and 177-178 (HR) each bind ITP.

Belongs to the HAM1 NTPase family. As to quaternary structure, homodimer. Requires Mg(2+) as cofactor. It depends on Mn(2+) as a cofactor.

The protein localises to the cytoplasm. The catalysed reaction is ITP + H2O = IMP + diphosphate + H(+). The enzyme catalyses dITP + H2O = dIMP + diphosphate + H(+). It catalyses the reaction XTP + H2O = XMP + diphosphate + H(+). It carries out the reaction N(6)-hydroxy-dATP + H2O = N(6)-hydroxy-dAMP + diphosphate + H(+). In terms of biological role, pyrophosphatase that hydrolyzes the non-canonical purine nucleotides inosine triphosphate (ITP), deoxyinosine triphosphate (dITP) as well as 2'-deoxy-N-6-hydroxylaminopurine triphosphate (dHAPTP) and xanthosine 5'-triphosphate (XTP) to their respective monophosphate derivatives. The enzyme does not distinguish between the deoxy- and ribose forms. Probably excludes non-canonical purines from RNA and DNA precursor pools, thus preventing their incorporation into RNA and DNA and avoiding chromosomal lesions. This Mus musculus (Mouse) protein is Inosine triphosphate pyrophosphatase (Itpa).